The primary structure comprises 292 residues: Probable septum site-determining protein MinC (292 aa).

A disordered region spans residues 109-188; the sequence is QVIDTAPPND…PQSSSALVIT (80 aa). Residues 140–150 show a composition bias toward acidic residues; the sequence is QDDEADGEQAD. A compositionally biased stretch (polar residues) spans 171–185; it reads ANRPTATPPQSSSAL.

Belongs to the MinC family. In terms of assembly, interacts with MinD and FtsZ.

Its function is as follows. Cell division inhibitor that blocks the formation of polar Z ring septums. Rapidly oscillates between the poles of the cell to destabilize FtsZ filaments that have formed before they mature into polar Z rings. Prevents FtsZ polymerization. The chain is Probable septum site-determining protein MinC from Bordetella pertussis (strain Tohama I / ATCC BAA-589 / NCTC 13251).